A 200-amino-acid chain; its full sequence is DNA-binding protein HupB (200 aa).

Positions 1–90 (MNKAELIDVL…PGAQFKAVVA (90 aa)) are bacterial histone-like domain. Residues lysine 3, lysine 72, lysine 86, lysine 103, lysine 137, lysine 144, and lysine 156 each carry the N6-acetyllysine modification. The interval 101–200 (AVKRGVATSA…KVTAAKRGRK (100 aa)) is degenerate repeats region. The segment at 179–200 (AKKAAVKKAPAKKVTAAKRGRK) is disordered.

This sequence belongs to the bacterial histone-like protein family. Long actinobacterial subfamily. In terms of assembly, binds to human laminin-2. May also be methylated and possibly phosphorylated in vivo.

Its subcellular location is the cytoplasm. It localises to the nucleoid. It is found in the secreted. The protein resides in the cell wall. The protein localises to the cell surface. It carries out the reaction 4 Fe(2+) + O2 + 4 H(+) = 4 Fe(3+) + 2 H2O. Its function is as follows. A nucleoid-associated protein (NAP) that plays a role in local chromosome architecture and chromosome compactation. Required for biofilm formation, stress survival and possibly in cell wall assembly, probably influences transcription. RNase E and HupB jointly contribute to cellular adaptation to changing growth conditions and survival during antibiotic treatment and in the host. Functionally, binds Fe(3+) but not Fe(2+). Has ferroxidase activity, converts Fe(2+) into Fe(3+) and in the presence of H(2)O(2) prevents the generation of hydroxyl radicals (the Fenton reaction). Protects DNA from damage in the presence of FeSO(4) and H(2)O(2). May function in iron storage. In terms of biological role, may be involved in entry into human Schwann cells. The sequence is that of DNA-binding protein HupB from Mycobacterium leprae (strain TN).